We begin with the raw amino-acid sequence, 591 residues long: DNA ligase (591 aa).

NAD(+)-binding positions include 38 to 42 (DEKYD), 87 to 88 (SL), and Glu-119. Catalysis depends on Lys-121, which acts as the N6-AMP-lysine intermediate. Positions 142, 181, 298, and 322 each coordinate NAD(+). Zn(2+) contacts are provided by Cys-415, Cys-418, Cys-433, and Cys-439.

This sequence belongs to the NAD-dependent DNA ligase family. LigA subfamily. Mg(2+) is required as a cofactor. Requires Mn(2+) as cofactor.

It carries out the reaction NAD(+) + (deoxyribonucleotide)n-3'-hydroxyl + 5'-phospho-(deoxyribonucleotide)m = (deoxyribonucleotide)n+m + AMP + beta-nicotinamide D-nucleotide.. DNA ligase that catalyzes the formation of phosphodiester linkages between 5'-phosphoryl and 3'-hydroxyl groups in double-stranded DNA using NAD as a coenzyme and as the energy source for the reaction. It is essential for DNA replication and repair of damaged DNA. The polypeptide is DNA ligase (Wigglesworthia glossinidia brevipalpis).